We begin with the raw amino-acid sequence, 472 residues long: ATP synthase subunit beta (472 aa).

Residue 157-164 (GGAGVGKT) coordinates ATP.

Belongs to the ATPase alpha/beta chains family. F-type ATPases have 2 components, CF(1) - the catalytic core - and CF(0) - the membrane proton channel. CF(1) has five subunits: alpha(3), beta(3), gamma(1), delta(1), epsilon(1). CF(0) has three main subunits: a(1), b(2) and c(9-12). The alpha and beta chains form an alternating ring which encloses part of the gamma chain. CF(1) is attached to CF(0) by a central stalk formed by the gamma and epsilon chains, while a peripheral stalk is formed by the delta and b chains.

The protein localises to the cell inner membrane. It catalyses the reaction ATP + H2O + 4 H(+)(in) = ADP + phosphate + 5 H(+)(out). Its function is as follows. Produces ATP from ADP in the presence of a proton gradient across the membrane. The catalytic sites are hosted primarily by the beta subunits. The sequence is that of ATP synthase subunit beta from Desulfatibacillum aliphaticivorans.